We begin with the raw amino-acid sequence, 440 residues long: Polycomb group protein VERNALIZATION 2 (440 aa).

The C2H2-type zinc-finger motif lies at Glu-86–His-111. The short motif at Lys-156 to Arg-163 is the Nuclear localization signal element. The VEFS-box stretch occupies residues Arg-267–Phe-345. The interval Asn-398–Lys-440 is disordered. A compositionally biased stretch (basic and acidic residues) spans His-420 to Lys-440.

This sequence belongs to the VEFS (VRN2-EMF2-FIS2-SU(Z)12) family. In terms of assembly, probable component of a PcG complex. In plants, PcG complexes are probably composed of a member of the EZ family (CLF or MEA), FIE, and a member of the VEFS family (FIS2, VRN2 or EMF2). Component of the plant homeodomain / polycomb repressive complex 2 (PHD-PRC2) large complex during prolonged cold, composed of core PRC2 components (VRN2, EZA1, FIE and MSI1), and three related PHD finger proteins (VIL1, VIL2 and VIN3) that mediates histone H3 trimethylation on 'Lys-27' (H3K27me3). Binds to ALP1. As to expression, weakly expressed. Expressed both during, and in the absence of vernalization.

The protein resides in the nucleus. In terms of biological role, polycomb group (PcG) protein. Plays a central role in vernalization by maintaining repressed the homeotic gene FLC, a floral repressor, after a cold treatment. PcG proteins act by forming multiprotein complexes, which are required to maintain the transcriptionally repressive state of homeotic genes throughout development. PcG proteins are not required to initiate repression, but to maintain it during later stages of development. They probably act via the methylation of histones, rendering chromatin heritably changed in its expressibility. Associates constitutively along the whole FLC locus. The protein is Polycomb group protein VERNALIZATION 2 (VRN2) of Arabidopsis thaliana (Mouse-ear cress).